Here is a 309-residue protein sequence, read N- to C-terminus: Homoserine kinase (309 aa).

Residue 91 to 101 (PIGSGLGSSAC) participates in ATP binding.

Belongs to the GHMP kinase family. Homoserine kinase subfamily.

It is found in the cytoplasm. The enzyme catalyses L-homoserine + ATP = O-phospho-L-homoserine + ADP + H(+). It participates in amino-acid biosynthesis; L-threonine biosynthesis; L-threonine from L-aspartate: step 4/5. Functionally, catalyzes the ATP-dependent phosphorylation of L-homoserine to L-homoserine phosphate. In Erwinia tasmaniensis (strain DSM 17950 / CFBP 7177 / CIP 109463 / NCPPB 4357 / Et1/99), this protein is Homoserine kinase.